A 273-amino-acid chain; its full sequence is HTH-type transcriptional activator RhaS (273 aa).

In terms of domain architecture, HTH araC/xylS-type spans 174 to 272 (YQLLDWLQNN…SQSPRDLRSQ (99 aa)). 2 DNA-binding regions (H-T-H motif) span residues 191–212 (PELA…KNKT) and 239–262 (VTDI…KREF).

In terms of assembly, binds DNA as a dimer.

The protein resides in the cytoplasm. Functionally, activates expression of the rhaBAD and rhaT operons. The polypeptide is HTH-type transcriptional activator RhaS (Yersinia pestis bv. Antiqua (strain Angola)).